Reading from the N-terminus, the 157-residue chain is 3-hydroxyacyl-[acyl-carrier-protein] dehydratase FabZ (157 aa).

The active site involves histidine 58.

It belongs to the thioester dehydratase family. FabZ subfamily.

It localises to the cytoplasm. It catalyses the reaction a (3R)-hydroxyacyl-[ACP] = a (2E)-enoyl-[ACP] + H2O. Involved in unsaturated fatty acids biosynthesis. Catalyzes the dehydration of short chain beta-hydroxyacyl-ACPs and long chain saturated and unsaturated beta-hydroxyacyl-ACPs. The chain is 3-hydroxyacyl-[acyl-carrier-protein] dehydratase FabZ from Brucella melitensis biotype 2 (strain ATCC 23457).